We begin with the raw amino-acid sequence, 219 residues long: Proteasome subunit beta type-9 (219 aa).

A propeptide spans 1–20 (removed in mature form); it reads MLRAGAPTGDLPRAGEVHTG. Thr-21 (nucleophile) is an active-site residue. 2 positions are modified to N6-acetyllysine: Lys-53 and Lys-109.

The protein belongs to the peptidase T1B family. The 26S proteasome consists of a 20S proteasome core and two 19S regulatory subunits. The 20S proteasome core is composed of 28 subunits that are arranged in four stacked rings, resulting in a barrel-shaped structure. The two end rings are each formed by seven alpha subunits, and the two central rings are each formed by seven beta subunits. The catalytic chamber with the active sites is on the inside of the barrel. Component of the immunoproteasome, where it displaces the equivalent housekeeping subunit PSMB6. Component of the spermatoproteasome, a form of the proteasome specifically found in testis. In terms of assembly, (Microbial infection) Interacts with HIV-1 TAT protein. Autocleaved. The resulting N-terminal Thr residue of the mature subunit is responsible for the nucleophile proteolytic activity.

The protein localises to the cytoplasm. Its subcellular location is the nucleus. The enzyme catalyses Cleavage of peptide bonds with very broad specificity.. Its function is as follows. The proteasome is a multicatalytic proteinase complex which is characterized by its ability to cleave peptides with Arg, Phe, Tyr, Leu, and Glu adjacent to the leaving group at neutral or slightly basic pH. The proteasome has an ATP-dependent proteolytic activity. This subunit is involved in antigen processing to generate class I binding peptides. Replacement of PSMB6 by PSMB9 increases the capacity of the immunoproteasome to cleave model peptides after hydrophobic and basic residues. This chain is Proteasome subunit beta type-9 (PSMB9), found in Homo sapiens (Human).